Here is a 167-residue protein sequence, read N- to C-terminus: T-cell surface glycoprotein CD3 delta chain (167 aa).

An N-terminal signal peptide occupies residues 1–21 (MEHSRCLSCLILAALLSQVNP). Over 22-100 (RALEVLEAED…NCVELDSATL (79 aa)) the chain is Extracellular. An intrachain disulfide couples Cys-37 to Cys-73. Residues Asn-38 and Asn-55 are each glycosylated (N-linked (GlcNAc...) asparagine). Residues 101–121 (AGLIITDIIATVLLALGVYCF) form a helical membrane-spanning segment. The Cytoplasmic segment spans residues 122-167 (AGHETGRFSRAADTQVLMGNDQLYQPLRERNDAQYSRLGDKWARNK). The region spanning 134–162 (DTQVLMGNDQLYQPLRERNDAQYSRLGDK) is the ITAM domain. Phosphotyrosine occurs at positions 145 and 156.

The TCR-CD3 complex is composed of a CD3D/CD3E and a CD3G/CD3E heterodimers that preferentially associate with TCRalpha and TCRbeta, respectively, to form TCRalpha/CD3E/CD3G and TCRbeta/CD3G/CD3E trimers. In turn, the hexamer interacts with CD3Z homodimer to form the TCR-CD3 complex. Alternatively, TCRalpha and TCRbeta can be replaced by TCRgamma and TCRdelta. Interacts with coreceptors CD4 and CD8. Phosphorylated on Tyr residues after T-cell receptor triggering by LCK in association with CD4/CD8. As to expression, CD3D is mostly present on T-lymphocytes with its TCR-CD3 partners. Present also in fetal NK-cells.

The protein resides in the cell membrane. Part of the TCR-CD3 complex present on T-lymphocyte cell surface that plays an essential role in adaptive immune response. When antigen presenting cells (APCs) activate T-cell receptor (TCR), TCR-mediated signals are transmitted across the cell membrane by the CD3 chains CD3D, CD3E, CD3G and CD3Z. All CD3 chains contain immunoreceptor tyrosine-based activation motifs (ITAMs) in their cytoplasmic domain. Upon TCR engagement, these motifs become phosphorylated by Src family protein tyrosine kinases LCK and FYN, resulting in the activation of downstream signaling pathways. In addition of this role of signal transduction in T-cell activation, CD3D plays an essential role in thymocyte differentiation. Indeed, participates in correct intracellular TCR-CD3 complex assembly and surface expression. In absence of a functional TCR-CD3 complex, thymocytes are unable to differentiate properly. Interacts with CD4 and CD8 and thus serves to establish a functional link between the TCR and coreceptors CD4 and CD8, which is needed for activation and positive selection of CD4 or CD8 T-cells. The sequence is that of T-cell surface glycoprotein CD3 delta chain (CD3D) from Ovis aries (Sheep).